We begin with the raw amino-acid sequence, 150 residues long: UPF0178 protein PBPRA1738 (150 aa).

Belongs to the UPF0178 family.

The polypeptide is UPF0178 protein PBPRA1738 (Photobacterium profundum (strain SS9)).